The chain runs to 727 residues: Non-structural protein 4 (727 aa).

Disordered regions lie at residues 1–38 and 673–727; these read MNQSRSFVTGRGRDLSRTPSALSSNSETPGSMSSPSEG and SMTL…KLSK. Residues 17 to 38 are compositionally biased toward polar residues; the sequence is RTPSALSSNSETPGSMSSPSEG. Basic residues predominate over residues 712-727; sequence SRRKARKARAASKLSK.

This chain is Non-structural protein 4, found in Rice dwarf virus (isolate Akita) (RDV).